Here is a 416-residue protein sequence, read N- to C-terminus: Inositol polyphosphate multikinase (416 aa).

Residues 1-38 (MATEPPSPLRVEAPGPPEMRTSPAIESTPEGTPQPAGG) form a disordered region. Alanine 2 is subject to N-acetylalanine. At serine 7 the chain carries Phosphoserine. Lysine 75 lines the ATP pocket. Arginine 82 contributes to the substrate binding site. ATP contacts are provided by residues 131 to 133 (EDV) and aspartate 144. Residues lysine 146, 160-167 (KIQQQVSK), and glutamine 196 contribute to the substrate site. Residues 320 to 330 (RHRKIYTKKHH) carry the Nuclear localization signal motif. Aspartate 385 contacts ATP. Histidine 388 provides a ligand contact to substrate.

The protein belongs to the inositol phosphokinase (IPK) family. Mg(2+) is required as a cofactor. Ubiquitous, with the highest expression in skeletal muscle, liver, placenta, lung, peripheral blood leukocytes, kidney, spleen and colon.

Its subcellular location is the nucleus. It catalyses the reaction 1D-myo-inositol 1,4,5-trisphosphate + 2 ATP = 1D-myo-inositol 1,3,4,5,6-pentakisphosphate + 2 ADP + 2 H(+). It carries out the reaction 1D-myo-inositol 1,3,4,6-tetrakisphosphate + ATP = 1D-myo-inositol 1,3,4,5,6-pentakisphosphate + ADP + H(+). The catalysed reaction is 1-octadecanoyl-2-(5Z,8Z,11Z,14Z)-eicosatetraenoyl-sn-glycero-3-phospho-1D-myo-inositol 4,5-bisphosphate + ATP = 1-octadecanoyl-2-(5Z,8Z,11Z,14Z-eicosatetraenoyl)-sn-glycero-3-phospho-(1D-myo-inositol 3,4,5-triphosphate) + ADP + H(+). The enzyme catalyses a 1,2-diacyl-sn-glycero-3-phospho-(1D-myo-inositol-4,5-bisphosphate) + ATP = a 1,2-diacyl-sn-glycero-3-phospho-(1D-myo-inositol-3,4,5-trisphosphate) + ADP + H(+). It catalyses the reaction 1D-myo-inositol 1,4,5,6-tetrakisphosphate + ATP = 1D-myo-inositol 1,3,4,5,6-pentakisphosphate + ADP + H(+). It participates in phospholipid metabolism; phosphatidylinositol metabolism. Its activity is regulated as follows. Inhibited by flavonoids that occupy the ATP-binding pocket. Inhibited by myricetin, quercetin, luteolin, kaempferol, isorhamnetin and diosmetin, and to a lesser degree by rhamnetin and apigenin. Its function is as follows. Inositol phosphate kinase with a broad substrate specificity. Phosphorylates inositol 1,4,5-trisphosphate (Ins(1,4,5)P3) first to inositol 1,3,4,5-tetrakisphosphate and then to inositol 1,3,4,5,6-pentakisphosphate (Ins(1,3,4,5,6)P5). Phosphorylates inositol 1,3,4,6-tetrakisphosphate (Ins(1,3,4,6)P4). Phosphorylates inositol 1,4,5,6-tetrakisphosphate (Ins(1,4,5,6)P4). Phosphorylates glycero-3-phospho-1D-myo-inositol 4,5-bisphosphate to glycero-3-phospho-1D-myo-inositol 3,4,5-trisphosphate. Plays an important role in MLKL-mediated necroptosis via its role in the biosynthesis of inositol pentakisphosphate (InsP5) and inositol hexakisphosphate (InsP6). Binding of these highly phosphorylated inositol phosphates to MLKL mediates the release of an N-terminal auto-inhibitory region, leading to activation of the kinase. Essential for activated phospho-MLKL to oligomerize and localize to the cell membrane during necroptosis. Required for normal embryonic development, probably via its role in the biosynthesis of inositol 1,3,4,5,6-pentakisphosphate (Ins(1,3,4,5,6)P5) and inositol hexakisphosphate (InsP6). The polypeptide is Inositol polyphosphate multikinase (IPMK) (Homo sapiens (Human)).